Consider the following 67-residue polypeptide: Neurotoxin Os3 (67 aa).

The LCN-type CS-alpha/beta domain occupies 3–67; it reads RDGYIAQPHN…GVIVDGEKCH (65 aa). 4 disulfide bridges follow: Cys-13–Cys-66, Cys-17–Cys-39, Cys-24–Cys-48, and Cys-28–Cys-50.

The protein belongs to the long (4 C-C) scorpion toxin superfamily. Sodium channel inhibitor family. Alpha subfamily. As to expression, expressed by the venom gland.

Its subcellular location is the secreted. In terms of biological role, binds to sodium channels (Nav) and inhibits the inactivation of the activated channels, thereby blocking neuronal transmission. The protein is Neurotoxin Os3 of Orthochirus scrobiculosus (Central Asian scorpion).